We begin with the raw amino-acid sequence, 671 residues long: DNA ligase (671 aa).

NAD(+) contacts are provided by residues 32–36 (DAEYD), 81–82 (SL), and glutamate 113. Catalysis depends on lysine 115, which acts as the N6-AMP-lysine intermediate. NAD(+) is bound by residues arginine 136, glutamate 173, lysine 290, and lysine 314. Cysteine 408, cysteine 411, cysteine 426, and cysteine 432 together coordinate Zn(2+). Residues 593-671 (EIDSPFAGKT…EAEMIRLLGA (79 aa)) form the BRCT domain.

The protein belongs to the NAD-dependent DNA ligase family. LigA subfamily. Mg(2+) serves as cofactor. It depends on Mn(2+) as a cofactor.

It catalyses the reaction NAD(+) + (deoxyribonucleotide)n-3'-hydroxyl + 5'-phospho-(deoxyribonucleotide)m = (deoxyribonucleotide)n+m + AMP + beta-nicotinamide D-nucleotide.. In terms of biological role, DNA ligase that catalyzes the formation of phosphodiester linkages between 5'-phosphoryl and 3'-hydroxyl groups in double-stranded DNA using NAD as a coenzyme and as the energy source for the reaction. It is essential for DNA replication and repair of damaged DNA. In Salmonella paratyphi A (strain ATCC 9150 / SARB42), this protein is DNA ligase.